The primary structure comprises 143 residues: Hemoglobin subunit alpha-2 (143 aa).

S2 carries the post-translational modification N-acetylserine. A Globin domain is found at 2–143; that stretch reads SLSTKDKDTV…LARALSEKYR (142 aa). The heme b site is built by H60 and H89.

It belongs to the globin family. Hb 2 is a heterotetramer of two alpha-2 and two beta chains. Red blood cells.

Involved in oxygen transport from gills to the various peripheral tissues. The sequence is that of Hemoglobin subunit alpha-2 from Cottoperca gobio (Frogmouth).